Reading from the N-terminus, the 600-residue chain is Netrin-1 (600 aa).

Residues 1–24 (MMRAMWEALAALAAVSCLVGAVRG) form the signal peptide. Positions 47–284 (HPRRCIPDFV…AVSDLQVGGR (238 aa)) constitute a Laminin N-terminal domain. Residues Asn95, Asn116, and Asn131 are each glycosylated (N-linked (GlcNAc...) asparagine). Intrachain disulfides connect Cys119–Cys152, Cys285–Cys294, Cys287–Cys304, Cys306–Cys315, Cys318–Cys338, Cys341–Cys350, Cys343–Cys368, Cys371–Cys380, Cys383–Cys401, Cys404–Cys416, Cys406–Cys423, Cys425–Cys434, Cys437–Cys451, and Cys472–Cys544. Laminin EGF-like domains follow at residues 285-340 (CKCN…ECVA), 341-403 (CNCN…ACKA), and 404-453 (CDCH…PCIK). Asn417 carries an N-linked (GlcNAc...) asparagine glycan. One can recognise an NTR domain in the interval 472–600 (CDSYCKASKG…KFQQREKKEL (129 aa)). Residues 530–532 (RGD) carry the Cell attachment site motif.

As to quaternary structure, binds to its receptors; DCC, UNC5A, UNC5B, UNC5C and probably UNC5D. Binds to its receptor; DSCAM. Interacts with APP.

It is found in the secreted. The protein localises to the cytoplasm. In terms of biological role, netrins control guidance of CNS commissural axons and peripheral motor axons. Its association with either DCC or some UNC5 receptors will lead to axon attraction or repulsion, respectively. Binding to UNC5C might cause dissociation of UNC5C from polymerized TUBB3 in microtubules and thereby lead to increased microtubule dynamics and axon repulsion. Involved in dorsal root ganglion axon projection towards the spinal cord. It also serves as a survival factor via its association with its receptors which prevent the initiation of apoptosis. Involved in colorectal tumorigenesis by regulating apoptosis. This chain is Netrin-1 (NTN1), found in Sus scrofa (Pig).